We begin with the raw amino-acid sequence, 111 residues long: MDHRDINTNMEALREALRYKNEVAGHGFSFDDGDLVWREEDDATWRRLCDVVNALISSKRMQRVLYMDLSITKGEGHLLLVDLQGTKNRLYKEPRFRRHLILIEDFLAYPR.

It belongs to the novirhabdovirus NV protein family.

Plays an essential role for the viral pathogenicity. In Salmo (IHNV), this protein is Non-virion protein (NV).